Here is a 1069-residue protein sequence, read N- to C-terminus: Carbamoyl phosphate synthase large chain (1069 aa).

Positions 1–401 (MPLNKDIKKV…AFLKGIRSLE (401 aa)) are carboxyphosphate synthetic domain. Positions 129, 169, 175, 176, 208, 210, 215, 241, 242, 243, 284, and 298 each coordinate ATP. The region spanning 133-327 (RDMMNRIGEP…IAKLAAKIAL (195 aa)) is the ATP-grasp 1 domain. Positions 284, 298, and 300 each coordinate Mg(2+). Mn(2+)-binding residues include Q284, E298, and N300. Residues 402–549 (IGKYSLDHNK…YSTYEQYDEV (148 aa)) form an oligomerization domain region. The segment at 550–932 (EVSNNKKVIV…ALYKGFVGAY (383 aa)) is carbamoyl phosphate synthetic domain. Residues 674–864 (DELLERLGIS…IVDLATQVML (191 aa)) form the ATP-grasp 2 domain. The ATP site is built by R710, K749, L751, E755, G780, V781, H782, S783, Q823, and E835. Residues Q823, E835, and N837 each coordinate Mg(2+). Residues Q823, E835, and N837 each coordinate Mn(2+). The 138-residue stretch at 932-1069 (YMYPSKEKGK…KDLEVFNIAK (138 aa)) folds into the MGS-like domain. Residues 933 to 1069 (MYPSKEKGKI…KDLEVFNIAK (137 aa)) form an allosteric domain region.

This sequence belongs to the CarB family. Composed of two chains; the small (or glutamine) chain promotes the hydrolysis of glutamine to ammonia, which is used by the large (or ammonia) chain to synthesize carbamoyl phosphate. Tetramer of heterodimers (alpha,beta)4. Mg(2+) serves as cofactor. Requires Mn(2+) as cofactor.

The enzyme catalyses hydrogencarbonate + L-glutamine + 2 ATP + H2O = carbamoyl phosphate + L-glutamate + 2 ADP + phosphate + 2 H(+). The catalysed reaction is hydrogencarbonate + NH4(+) + 2 ATP = carbamoyl phosphate + 2 ADP + phosphate + 2 H(+). It functions in the pathway amino-acid biosynthesis; L-arginine biosynthesis; carbamoyl phosphate from bicarbonate: step 1/1. The protein operates within pyrimidine metabolism; UMP biosynthesis via de novo pathway; (S)-dihydroorotate from bicarbonate: step 1/3. Functionally, large subunit of the glutamine-dependent carbamoyl phosphate synthetase (CPSase). CPSase catalyzes the formation of carbamoyl phosphate from the ammonia moiety of glutamine, carbonate, and phosphate donated by ATP, constituting the first step of 2 biosynthetic pathways, one leading to arginine and/or urea and the other to pyrimidine nucleotides. The large subunit (synthetase) binds the substrates ammonia (free or transferred from glutamine from the small subunit), hydrogencarbonate and ATP and carries out an ATP-coupled ligase reaction, activating hydrogencarbonate by forming carboxy phosphate which reacts with ammonia to form carbamoyl phosphate. The sequence is that of Carbamoyl phosphate synthase large chain from Clostridium beijerinckii (strain ATCC 51743 / NCIMB 8052) (Clostridium acetobutylicum).